The chain runs to 61 residues: Large ribosomal subunit protein uL30 (61 aa).

The protein belongs to the universal ribosomal protein uL30 family. Part of the 50S ribosomal subunit.

The chain is Large ribosomal subunit protein uL30 from Jannaschia sp. (strain CCS1).